The chain runs to 248 residues: Probable transcriptional regulatory protein Mrad2831_3553 (248 aa).

This sequence belongs to the TACO1 family.

It is found in the cytoplasm. In Methylobacterium radiotolerans (strain ATCC 27329 / DSM 1819 / JCM 2831 / NBRC 15690 / NCIMB 10815 / 0-1), this protein is Probable transcriptional regulatory protein Mrad2831_3553.